A 360-amino-acid chain; its full sequence is Protein Wnt-2 (360 aa).

The signal sequence occupies residues Met1 to Ser25. Intrachain disulfides connect Cys76–Cys87, Cys127–Cys135, Cys137–Cys157, Cys206–Cys220, Cys208–Cys215, Cys278–Cys309, Cys294–Cys304, Cys308–Cys348, Cys324–Cys339, Cys326–Cys336, and Cys331–Cys332. Ser212 is lipidated: O-palmitoleoyl serine; by PORCN. Asn295 is a glycosylation site (N-linked (GlcNAc...) asparagine).

This sequence belongs to the Wnt family. Palmitoleoylation is required for efficient binding to frizzled receptors. Depalmitoleoylation leads to Wnt signaling pathway inhibition.

It localises to the secreted. Its subcellular location is the extracellular space. The protein resides in the extracellular matrix. In terms of biological role, ligand for members of the frizzled family of seven transmembrane receptors. Functions in the canonical Wnt signaling pathway that results in activation of transcription factors of the TCF/LEF family. Functions as a upstream regulator of FGF10 expression. Plays an important role in embryonic lung development. May contribute to embryonic brain development by regulating the proliferation of dopaminergic precursors and neurons. This is Protein Wnt-2 (WNT2) from Gorilla gorilla gorilla (Western lowland gorilla).